The sequence spans 85 residues: Small ribosomal subunit protein uS12m (85 aa).

The protein belongs to the universal ribosomal protein uS12 family.

The protein resides in the mitochondrion matrix. The protein localises to the kinetoplast. In terms of biological role, protein S12 is involved in the translation initiation step. The chain is Small ribosomal subunit protein uS12m (RPS12) from Leishmania tarentolae (Sauroleishmania tarentolae).